Reading from the N-terminus, the 349-residue chain is Protein RecA (349 aa).

An ATP-binding site is contributed by 64-71 (GPESSGKT). Residues 328-349 (NGEIEVEAPSEEEFEDLPLDLK) are disordered. Residues 331 to 349 (IEVEAPSEEEFEDLPLDLK) are compositionally biased toward acidic residues.

It belongs to the RecA family.

The protein resides in the cytoplasm. Functionally, can catalyze the hydrolysis of ATP in the presence of single-stranded DNA, the ATP-dependent uptake of single-stranded DNA by duplex DNA, and the ATP-dependent hybridization of homologous single-stranded DNAs. It interacts with LexA causing its activation and leading to its autocatalytic cleavage. The sequence is that of Protein RecA from Halalkalibacterium halodurans (strain ATCC BAA-125 / DSM 18197 / FERM 7344 / JCM 9153 / C-125) (Bacillus halodurans).